A 233-amino-acid polypeptide reads, in one-letter code: Cilia- and flagella-associated protein 299 (233 aa).

It localises to the cytoplasm. Its subcellular location is the nucleus. Its function is as follows. May be involved in spermatogenesis. This is Cilia- and flagella-associated protein 299 from Homo sapiens (Human).